Here is a 229-residue protein sequence, read N- to C-terminus: Uracil-DNA glycosylase (229 aa).

Aspartate 64 acts as the Proton acceptor in catalysis.

The protein belongs to the uracil-DNA glycosylase (UDG) superfamily. UNG family.

Its subcellular location is the cytoplasm. The enzyme catalyses Hydrolyzes single-stranded DNA or mismatched double-stranded DNA and polynucleotides, releasing free uracil.. Excises uracil residues from the DNA which can arise as a result of misincorporation of dUMP residues by DNA polymerase or due to deamination of cytosine. The sequence is that of Uracil-DNA glycosylase from Shigella flexneri serotype 5b (strain 8401).